The sequence spans 113 residues: Na(+)/H(+) antiporter subunit C1 (113 aa).

A run of 3 helical transmembrane segments spans residues 1-21 (MEII…YLVL), 28-48 (IVMG…TMGG), and 72-92 (LILT…VLAF).

It belongs to the CPA3 antiporters (TC 2.A.63) subunit C family. May form a heterooligomeric complex that consists of seven subunits: mnhA1, mnhB1, mnhC1, mnhD1, mnhE1, mnhF1 and mnhG1.

The protein resides in the cell membrane. Its function is as follows. Mnh complex is a Na(+)/H(+) antiporter involved in Na(+) excretion. This chain is Na(+)/H(+) antiporter subunit C1 (mnhC1), found in Staphylococcus aureus (strain JH1).